Reading from the N-terminus, the 786-residue chain is Spermatogenesis-associated protein 20 (786 aa).

A signal peptide spans 1–22 (MLGARAWLGRVLLLPRAGAGLA). Positions 23 to 61 (ASRRGSSSRDKDRSATVSSSVPMPAGGKGSHPSSTPQRV) are disordered. The residue at position 649 (S649) is a Phosphoserine.

The protein localises to the secreted. Functionally, may play a role in fertility regulation. This Homo sapiens (Human) protein is Spermatogenesis-associated protein 20 (SPATA20).